We begin with the raw amino-acid sequence, 317 residues long: Beta-ketoacyl-[acyl-carrier-protein] synthase III (317 aa).

Active-site residues include Cys112 and His244. The ACP-binding stretch occupies residues Gln245–Arg249. Asn274 is an active-site residue.

Belongs to the thiolase-like superfamily. FabH family. Homodimer.

Its subcellular location is the cytoplasm. The enzyme catalyses malonyl-[ACP] + acetyl-CoA + H(+) = 3-oxobutanoyl-[ACP] + CO2 + CoA. It participates in lipid metabolism; fatty acid biosynthesis. Catalyzes the condensation reaction of fatty acid synthesis by the addition to an acyl acceptor of two carbons from malonyl-ACP. Catalyzes the first condensation reaction which initiates fatty acid synthesis and may therefore play a role in governing the total rate of fatty acid production. Possesses both acetoacetyl-ACP synthase and acetyl transacylase activities. Its substrate specificity determines the biosynthesis of branched-chain and/or straight-chain of fatty acids. The polypeptide is Beta-ketoacyl-[acyl-carrier-protein] synthase III (Rickettsia massiliae (strain Mtu5)).